The sequence spans 374 residues: Tetraacyldisaccharide 4'-kinase (374 aa).

43–50 (TMGGTGKT) serves as a coordination point for ATP.

Belongs to the LpxK family.

The enzyme catalyses a lipid A disaccharide + ATP = a lipid IVA + ADP + H(+). Its pathway is glycolipid biosynthesis; lipid IV(A) biosynthesis; lipid IV(A) from (3R)-3-hydroxytetradecanoyl-[acyl-carrier-protein] and UDP-N-acetyl-alpha-D-glucosamine: step 6/6. Functionally, transfers the gamma-phosphate of ATP to the 4'-position of a tetraacyldisaccharide 1-phosphate intermediate (termed DS-1-P) to form tetraacyldisaccharide 1,4'-bis-phosphate (lipid IVA). The sequence is that of Tetraacyldisaccharide 4'-kinase from Leptospira biflexa serovar Patoc (strain Patoc 1 / Ames).